The primary structure comprises 523 residues: Bifunctional purine biosynthesis protein PurH (523 aa).

Residues 1–150 (MSDVVPVRNA…KNHGDVAIAT (150 aa)) enclose the MGS-like domain.

It belongs to the PurH family.

It catalyses the reaction (6R)-10-formyltetrahydrofolate + 5-amino-1-(5-phospho-beta-D-ribosyl)imidazole-4-carboxamide = 5-formamido-1-(5-phospho-D-ribosyl)imidazole-4-carboxamide + (6S)-5,6,7,8-tetrahydrofolate. The enzyme catalyses IMP + H2O = 5-formamido-1-(5-phospho-D-ribosyl)imidazole-4-carboxamide. Its pathway is purine metabolism; IMP biosynthesis via de novo pathway; 5-formamido-1-(5-phospho-D-ribosyl)imidazole-4-carboxamide from 5-amino-1-(5-phospho-D-ribosyl)imidazole-4-carboxamide (10-formyl THF route): step 1/1. The protein operates within purine metabolism; IMP biosynthesis via de novo pathway; IMP from 5-formamido-1-(5-phospho-D-ribosyl)imidazole-4-carboxamide: step 1/1. This Rhodopirellula baltica (strain DSM 10527 / NCIMB 13988 / SH1) protein is Bifunctional purine biosynthesis protein PurH.